A 121-amino-acid polypeptide reads, in one-letter code: MARIAGVDIPRDKRVEVALTYIYGIGLTRAKTILTKSGVNPDIRVKDLEDGDVQKLRTALEAFTIEGDLRRQEGMALKRLQDIGCLRGRRHRMSLPVRGQRTRTNARTRRGARKTVAGKKK.

Residues 97–121 are disordered; that stretch reads VRGQRTRTNARTRRGARKTVAGKKK. Residues 100-121 show a composition bias toward basic residues; it reads QRTRTNARTRRGARKTVAGKKK.

Belongs to the universal ribosomal protein uS13 family. In terms of assembly, part of the 30S ribosomal subunit. Forms a loose heterodimer with protein S19. Forms two bridges to the 50S subunit in the 70S ribosome.

In terms of biological role, located at the top of the head of the 30S subunit, it contacts several helices of the 16S rRNA. In the 70S ribosome it contacts the 23S rRNA (bridge B1a) and protein L5 of the 50S subunit (bridge B1b), connecting the 2 subunits; these bridges are implicated in subunit movement. Contacts the tRNAs in the A and P-sites. This chain is Small ribosomal subunit protein uS13, found in Prochlorococcus marinus (strain MIT 9303).